Here is a 360-residue protein sequence, read N- to C-terminus: Peptide chain release factor 1 (360 aa).

Q235 bears the N5-methylglutamine mark. Over residues 283-293 (EREAQAKEASA) the composition is skewed to basic and acidic residues. A disordered region spans residues 283-305 (EREAQAKEASARKSLIGSGDRSD).

The protein belongs to the prokaryotic/mitochondrial release factor family. In terms of processing, methylated by PrmC. Methylation increases the termination efficiency of RF1.

It localises to the cytoplasm. Its function is as follows. Peptide chain release factor 1 directs the termination of translation in response to the peptide chain termination codons UAG and UAA. The polypeptide is Peptide chain release factor 1 (Ralstonia pickettii (strain 12J)).